The following is a 428-amino-acid chain: Maltoporin (428 aa).

The N-terminal stretch at 1–21 (MKKTLLAVAIGGAMFATSAAA) is a signal peptide.

It belongs to the porin LamB (TC 1.B.3) family. Homotrimer formed of three 18-stranded antiparallel beta-barrels, containing three independent channels.

Its subcellular location is the cell outer membrane. It carries out the reaction beta-maltose(in) = beta-maltose(out). Its function is as follows. Involved in the transport of maltose and maltodextrins. The polypeptide is Maltoporin (Mannheimia succiniciproducens (strain KCTC 0769BP / MBEL55E)).